A 526-amino-acid chain; its full sequence is MTSRSSQGDAAPFLTQADNTEEEGAPDPGGHSSDEEEEEGKDHGKEAHLLTGISYRHSVTIVIILFYINLLNYMDRFTVAGVLSDIKEDYHISDSNSGLVQTVFICSYMFLAPVFGYLGDRYNRKLIMCIGISFWSLVTLLSSFVSKQYFWLFLLTRGLVGVGEASYSTIAPTIIADLFLADQRSRMLSFFYFATPVGCGLGYIAGSKVTSTAGDWHWALRVTPGLGLVAVLLLIFVAKEPPRGALERKSDRPLTNTSWFSDVKALLKNPSFILSTFGFTTVAFVTGALALWGPTYLMRSRRVIYKTEPCQGGICNYDDSMIFGGITCVTGVLGVLTGVEISKRYRKTNPRADPLVCAVGMISSAPFLYLSLAFADTSLVATYAFIFIGETLLSLNWALVADILLYVVIPTRRSTAEALQIVVSHLLGDAGSPYLIGVISDQIQKGKAPSFLIQMRSLEYALMICAFVGVIGGGFFLATALFIEKDRKRAELFSQGLLPADETDAERIVVPKRGRSTKVPVSSVLI.

The segment at 1–43 (MTSRSSQGDAAPFLTQADNTEEEGAPDPGGHSSDEEEEEGKDH) is disordered. 12 consecutive transmembrane segments (helical) span residues 48–68 (HLLTGISYRHSVTIVIILFYI), 98–118 (GLVQTVFICSYMFLAPVFGYL), 126–146 (LIMCIGISFWSLVTLLSSFVS), 159–179 (LVGVGEASYSTIAPTIIADLF), 187–207 (MLSFFYFATPVGCGLGYIAGS), 218–238 (WALRVTPGLGLVAVLLLIFVA), 272–292 (FILSTFGFTTVAFVTGALALW), 321–341 (MIFGGITCVTGVLGVLTGVEI), 355–375 (LVCAVGMISSAPFLYLSLAFA), 385–405 (FIFIGETLLSLNWALVADILL), 419–439 (LQIVVSHLLGDAGSPYLIGVI), and 463–483 (MICAFVGVIGGGFFLATALFI).

This sequence belongs to the major facilitator superfamily. Spinster (TC 2.A.1.49) family.

The protein resides in the lysosome membrane. It catalyses the reaction a 1-acyl-sn-glycero-3-phosphocholine(out) + H(+)(out) = a 1-acyl-sn-glycero-3-phosphocholine(in) + H(+)(in). The catalysed reaction is a 1-acyl-sn-glycero-3-phosphoethanolamine(out) + H(+)(out) = a 1-acyl-sn-glycero-3-phosphoethanolamine(in) + H(+)(in). It carries out the reaction a 1-O-(1Z-alkenyl)-sn-glycero-3-phosphocholine(out) + H(+)(out) = a 1-O-(1Z-alkenyl)-sn-glycero-3-phosphocholine(in) + H(+)(in). The enzyme catalyses a 1-O-(1Z-alkenyl)-sn-glycero-3-phosphoethanolamine(out) + H(+)(out) = a 1-O-(1Z-alkenyl)-sn-glycero-3-phosphoethanolamine(in) + H(+)(in). Its function is as follows. Mediates the rate-limiting, proton-dependent, lysosomal efflux of lysophospholipids. Selective for zwitterionic headgroups such as lysophosphatidylcholine (LPC) and lysophosphatidylethanolamine (LPE). Essential player in lysosomal homeostasis. This is Protein spinster homolog 1 (spns1) from Xenopus tropicalis (Western clawed frog).